Consider the following 43-residue polypeptide: Protein PsbN (43 aa).

Residues 5-27 (TLVAISISCLLVSFTGYALYTAF) traverse the membrane as a helical segment.

This sequence belongs to the PsbN family.

It localises to the plastid. Its subcellular location is the chloroplast thylakoid membrane. In terms of biological role, may play a role in photosystem I and II biogenesis. The polypeptide is Protein PsbN (Cryptomeria japonica (Japanese cedar)).